A 250-amino-acid polypeptide reads, in one-letter code: Ribosomal RNA small subunit methyltransferase J (250 aa).

S-adenosyl-L-methionine contacts are provided by residues 101 to 102 (RD), 117 to 118 (ER), 153 to 154 (SS), and Asp171.

The protein belongs to the methyltransferase superfamily. RsmJ family.

It localises to the cytoplasm. The enzyme catalyses guanosine(1516) in 16S rRNA + S-adenosyl-L-methionine = N(2)-methylguanosine(1516) in 16S rRNA + S-adenosyl-L-homocysteine + H(+). Specifically methylates the guanosine in position 1516 of 16S rRNA. This chain is Ribosomal RNA small subunit methyltransferase J, found in Escherichia coli (strain SMS-3-5 / SECEC).